Here is a 533-residue protein sequence, read N- to C-terminus: Peptide chain release factor 3 (533 aa).

The tr-type G domain occupies 9 to 284 (ARRRTFAIIS…ALCELSPPPL (276 aa)). GTP is bound by residues 18-25 (SHPDAGKT), 95-99 (DTPGH), and 149-152 (NKLD).

Belongs to the TRAFAC class translation factor GTPase superfamily. Classic translation factor GTPase family. PrfC subfamily.

It is found in the cytoplasm. Increases the formation of ribosomal termination complexes and stimulates activities of RF-1 and RF-2. It binds guanine nucleotides and has strong preference for UGA stop codons. It may interact directly with the ribosome. The stimulation of RF-1 and RF-2 is significantly reduced by GTP and GDP, but not by GMP. This chain is Peptide chain release factor 3, found in Cupriavidus taiwanensis (strain DSM 17343 / BCRC 17206 / CCUG 44338 / CIP 107171 / LMG 19424 / R1) (Ralstonia taiwanensis (strain LMG 19424)).